We begin with the raw amino-acid sequence, 165 residues long: S-ribosylhomocysteine lyase (165 aa).

Fe cation contacts are provided by histidine 54, histidine 58, and cysteine 128.

It belongs to the LuxS family. Homodimer. Fe cation serves as cofactor.

The catalysed reaction is S-(5-deoxy-D-ribos-5-yl)-L-homocysteine = (S)-4,5-dihydroxypentane-2,3-dione + L-homocysteine. In terms of biological role, involved in the synthesis of autoinducer 2 (AI-2) which is secreted by bacteria and is used to communicate both the cell density and the metabolic potential of the environment. The regulation of gene expression in response to changes in cell density is called quorum sensing. Catalyzes the transformation of S-ribosylhomocysteine (RHC) to homocysteine (HC) and 4,5-dihydroxy-2,3-pentadione (DPD). In Helicobacter hepaticus (strain ATCC 51449 / 3B1), this protein is S-ribosylhomocysteine lyase.